The following is a 117-amino-acid chain: UPF0102 protein Ssed_4252 (117 aa).

Belongs to the UPF0102 family.

In Shewanella sediminis (strain HAW-EB3), this protein is UPF0102 protein Ssed_4252.